Consider the following 404-residue polypeptide: Cysteine desulfurase IscS (404 aa).

Pyridoxal 5'-phosphate-binding positions include Ala75–Thr76, Asn155, Gln183, and Ser203–His205. Lys206 carries the post-translational modification N6-(pyridoxal phosphate)lysine. Thr243 is a binding site for pyridoxal 5'-phosphate. Cys328 (cysteine persulfide intermediate) is an active-site residue. Cys328 provides a ligand contact to [2Fe-2S] cluster.

This sequence belongs to the class-V pyridoxal-phosphate-dependent aminotransferase family. NifS/IscS subfamily. As to quaternary structure, homodimer. Forms a heterotetramer with IscU, interacts with other sulfur acceptors. The cofactor is pyridoxal 5'-phosphate.

The protein resides in the cytoplasm. The enzyme catalyses (sulfur carrier)-H + L-cysteine = (sulfur carrier)-SH + L-alanine. The protein operates within cofactor biosynthesis; iron-sulfur cluster biosynthesis. Master enzyme that delivers sulfur to a number of partners involved in Fe-S cluster assembly, tRNA modification or cofactor biosynthesis. Catalyzes the removal of elemental sulfur atoms from cysteine to produce alanine. Functions as a sulfur delivery protein for Fe-S cluster synthesis onto IscU, an Fe-S scaffold assembly protein, as well as other S acceptor proteins. This Pseudomonas fluorescens (strain SBW25) protein is Cysteine desulfurase IscS.